A 597-amino-acid polypeptide reads, in one-letter code: Exochitinase 1 (597 aa).

The segment at residues 1-29 (MDRFRPLAVLIAAALTLSGTTALSSAARA) is a signal peptide (or 32). Positions 172–253 (PPTGLRTGSV…ATVTATTAPG (82 aa)) constitute a Fibronectin type-III domain. The GH18 domain maps to 264–597 (HALVGYLHAS…FQRTFDGYFG (334 aa)). Glutamate 384 functions as the Proton donor in the catalytic mechanism.

This sequence belongs to the glycosyl hydrolase 18 family. Chitinase class II subfamily. The N-terminus is blocked.

It carries out the reaction Random endo-hydrolysis of N-acetyl-beta-D-glucosaminide (1-&gt;4)-beta-linkages in chitin and chitodextrins.. With respect to regulation, inhibited by the pseudosugar allosamidin A. Exochitinase that generates exclusively chitobiose from chitotetraose, chitohexaose, and colloidal high-molecular mass chitin. This is Exochitinase 1 (chi01) from Streptomyces olivaceoviridis (Streptomyces corchorusii).